We begin with the raw amino-acid sequence, 778 residues long: Serine/threonine-protein kinase BRSK1 (778 aa).

Positions 1–12 (MSSGSKEGGGGS) are enriched in gly residues. The tract at residues 1-29 (MSSGSKEGGGGSPAYHLPHPHPHPPQHAQ) is disordered. The region spanning 34–285 (YRLEKTLGKG…LEQIQKHPWY (252 aa)) is the Protein kinase domain. Residues 40 to 48 (LGKGQTGLV) and K63 contribute to the ATP site. Residue D156 is the Proton acceptor of the active site. At T189 the chain carries Phosphothreonine; by LKB1. A UBA domain is found at 314–356 (ELDPDVLESMASLGCFRDRERLHRELRSEEENQEKMIYYLLLD). Over residues 362 to 383 (PSCEDQDLPPRNDVDPPRKRVD) the composition is skewed to basic and acidic residues. Residues 362–548 (PSCEDQDLPP…SPGGGVGGAA (187 aa)) are disordered. A phosphoserine mark is found at S399, S443, S447, and S450. Residues 430–457 (SRSVSGASTGLSSSPLSSPRSPVFSFSP) show a composition bias toward low complexity. Omega-N-methylarginine is present on residues R466, R481, R484, and R498. Residues 491 to 508 (QPPPPSARSTPLPGPPGS) are compositionally biased toward pro residues. At S508 the chain carries Phosphoserine. Residues 509–533 (PRSSGGTPLHSPLHTPRASPTGTPG) show a composition bias toward low complexity. R525 is modified (omega-N-methylarginine). Residues T529 and T535 each carry the phosphothreonine modification. Position 550 is an omega-N-methylarginine (R550). The segment at 560-588 (FLGSPRFHRRKMQVPTAEEMSSLTPESSP) is disordered. Phosphothreonine is present on T583. A phosphoserine mark is found at S586, S587, and S601. The tract at residues 719–778 (QPSVQALADEKNGAQTRPAGTPPRSLQPPPGRSDPDLSSSPRRGPPKDKKLLATNGTPLP) is disordered.

It belongs to the protein kinase superfamily. CAMK Ser/Thr protein kinase family. SNF1 subfamily. The cofactor is Mg(2+). Phosphorylated at Thr-189 by STK11/LKB1 in complex with STE20-related adapter-alpha (STRADA) pseudo kinase and CAB39. Not phosphorylated at Thr-189 by CaMKK2. In contrast, it is phosphorylated and activated by CaMKK1. May be inactivated via dephosphorylation of Thr-189 by PP2C. In terms of tissue distribution, present in the gray matter of the brain and spinal cord (at protein level). Expressed in the nervous system, distributed within the brain and spinal cord of embryonic and postnatal animals.

Its subcellular location is the cytoplasm. It localises to the nucleus. The protein resides in the cytoskeleton. It is found in the microtubule organizing center. The protein localises to the centrosome. Its subcellular location is the synapse. It localises to the presynaptic active zone. The protein resides in the cytoplasmic vesicle. It is found in the secretory vesicle. The protein localises to the synaptic vesicle. It carries out the reaction L-seryl-[protein] + ATP = O-phospho-L-seryl-[protein] + ADP + H(+). It catalyses the reaction L-threonyl-[protein] + ATP = O-phospho-L-threonyl-[protein] + ADP + H(+). The catalysed reaction is L-seryl-[tau protein] + ATP = O-phospho-L-seryl-[tau protein] + ADP + H(+). The enzyme catalyses L-threonyl-[tau protein] + ATP = O-phospho-L-threonyl-[tau protein] + ADP + H(+). Activated by phosphorylation on Thr-189 by STK11/LKB1. Functionally, serine/threonine-protein kinase that plays a key role in polarization of neurons and centrosome duplication. Phosphorylates CDC25B, CDC25C, MAPT/TAU, RIMS1, TUBG1, TUBG2 and WEE1. Following phosphorylation and activation by STK11/LKB1, acts as a key regulator of polarization of cortical neurons, probably by mediating phosphorylation of microtubule-associated proteins such as MAPT/TAU at 'Thr-504' and 'Ser-554'. Also regulates neuron polarization by mediating phosphorylation of WEE1 at 'Ser-642' in postmitotic neurons, leading to down-regulate WEE1 activity in polarized neurons. In neurons, localizes to synaptic vesicles and plays a role in neurotransmitter release, possibly by phosphorylating RIMS1. Also acts as a positive regulator of centrosome duplication by mediating phosphorylation of gamma-tubulin (TUBG1 and TUBG2) at 'Ser-131', leading to translocation of gamma-tubulin and its associated proteins to the centrosome. Involved in the UV-induced DNA damage checkpoint response, probably by inhibiting CDK1 activity through phosphorylation and activation of WEE1, and inhibition of CDC25B and CDC25C. The polypeptide is Serine/threonine-protein kinase BRSK1 (Brsk1) (Mus musculus (Mouse)).